The primary structure comprises 680 residues: Penicillin-binding protein 2B (680 aa).

The Cytoplasmic segment spans residues 1–8 (MRKFNSHS). A helical membrane pass occupies residues 9–29 (IPIRLNLLFSIVILLFMTIIG). At 30-680 (RLLYMQVLNK…NLYQKYHPMN (651 aa)) the chain is on the extracellular side. The active-site Acyl-ester intermediate is the serine 386.

Belongs to the transpeptidase family. Interacts with MreC in the elongasome.

It localises to the cell membrane. A transpeptidase that forms peptide cross-links between adjacent glycan strands in cell wall peptidoglycan (PG). Part of the elongasome machinery that synthesizes peripheral PG. This Streptococcus pneumoniae serotype 2 (strain D39 / NCTC 7466) protein is Penicillin-binding protein 2B.